Here is a 160-residue protein sequence, read N- to C-terminus: 2-C-methyl-D-erythritol 2,4-cyclodiphosphate synthase (160 aa).

A divalent metal cation contacts are provided by D12 and H14. 4-CDP-2-C-methyl-D-erythritol 2-phosphate-binding positions include 12-14 and 38-39; these read DVH and HS. H46 contacts a divalent metal cation. 4-CDP-2-C-methyl-D-erythritol 2-phosphate contacts are provided by residues 60-62, 65-69, 136-139, F143, and R146; these read DIG, FPDTD, and TTTE.

This sequence belongs to the IspF family. In terms of assembly, homotrimer. The cofactor is a divalent metal cation.

It carries out the reaction 4-CDP-2-C-methyl-D-erythritol 2-phosphate = 2-C-methyl-D-erythritol 2,4-cyclic diphosphate + CMP. Its pathway is isoprenoid biosynthesis; isopentenyl diphosphate biosynthesis via DXP pathway; isopentenyl diphosphate from 1-deoxy-D-xylulose 5-phosphate: step 4/6. In terms of biological role, involved in the biosynthesis of isopentenyl diphosphate (IPP) and dimethylallyl diphosphate (DMAPP), two major building blocks of isoprenoid compounds. Catalyzes the conversion of 4-diphosphocytidyl-2-C-methyl-D-erythritol 2-phosphate (CDP-ME2P) to 2-C-methyl-D-erythritol 2,4-cyclodiphosphate (ME-CPP) with a corresponding release of cytidine 5-monophosphate (CMP). The sequence is that of 2-C-methyl-D-erythritol 2,4-cyclodiphosphate synthase from Acinetobacter baumannii (strain SDF).